Here is a 370-residue protein sequence, read N- to C-terminus: 3-isopropylmalate dehydrogenase (370 aa).

77 to 90 (GAKWDGVPYEARPE) lines the NAD(+) pocket. Substrate-binding residues include arginine 97, arginine 107, arginine 135, and aspartate 226. Mg(2+)-binding residues include aspartate 226, aspartate 250, and aspartate 254. 290–302 (GSAPDIAGKGLAN) provides a ligand contact to NAD(+).

The protein belongs to the isocitrate and isopropylmalate dehydrogenases family. LeuB type 1 subfamily. In terms of assembly, homodimer. Requires Mg(2+) as cofactor. It depends on Mn(2+) as a cofactor.

Its subcellular location is the cytoplasm. It catalyses the reaction (2R,3S)-3-isopropylmalate + NAD(+) = 4-methyl-2-oxopentanoate + CO2 + NADH. It participates in amino-acid biosynthesis; L-leucine biosynthesis; L-leucine from 3-methyl-2-oxobutanoate: step 3/4. Functionally, catalyzes the oxidation of 3-carboxy-2-hydroxy-4-methylpentanoate (3-isopropylmalate) to 3-carboxy-4-methyl-2-oxopentanoate. The product decarboxylates to 4-methyl-2 oxopentanoate. This chain is 3-isopropylmalate dehydrogenase, found in Rhodopseudomonas palustris (strain BisB18).